The primary structure comprises 447 residues: Methylenetetrahydrofolate--tRNA-(uracil-5-)-methyltransferase TrmFO (447 aa).

An FAD-binding site is contributed by 13 to 18; it reads GAGLAG.

The protein belongs to the MnmG family. TrmFO subfamily. Requires FAD as cofactor.

The protein localises to the cytoplasm. It catalyses the reaction uridine(54) in tRNA + (6R)-5,10-methylene-5,6,7,8-tetrahydrofolate + NADH + H(+) = 5-methyluridine(54) in tRNA + (6S)-5,6,7,8-tetrahydrofolate + NAD(+). The catalysed reaction is uridine(54) in tRNA + (6R)-5,10-methylene-5,6,7,8-tetrahydrofolate + NADPH + H(+) = 5-methyluridine(54) in tRNA + (6S)-5,6,7,8-tetrahydrofolate + NADP(+). Its function is as follows. Catalyzes the folate-dependent formation of 5-methyl-uridine at position 54 (M-5-U54) in all tRNAs. This chain is Methylenetetrahydrofolate--tRNA-(uracil-5-)-methyltransferase TrmFO, found in Streptococcus thermophilus (strain ATCC BAA-491 / LMD-9).